The following is a 213-amino-acid chain: Peptidyl-prolyl cis-trans isomerase B (213 aa).

The first 23 residues, methionine 1–serine 23, serve as a signal peptide directing secretion. Positions phenylalanine 35–histidine 197 constitute a PPIase cyclophilin-type domain. The Prevents secretion from ER signature appears at aspartate 210–glutamate 213.

It belongs to the cyclophilin-type PPIase family. PPIase B subfamily.

The protein resides in the endoplasmic reticulum lumen. The enzyme catalyses [protein]-peptidylproline (omega=180) = [protein]-peptidylproline (omega=0). With respect to regulation, inhibited by cyclosporin A (CsA). Functionally, PPIases accelerate the folding of proteins. It catalyzes the cis-trans isomerization of proline imidic peptide bonds in oligopeptides. The protein is Peptidyl-prolyl cis-trans isomerase B of Schistosoma japonicum (Blood fluke).